Here is a 277-residue protein sequence, read N- to C-terminus: S-formylglutathione hydrolase FrmB (277 aa).

Active-site charge relay system residues include serine 145, aspartate 221, and histidine 254.

This sequence belongs to the esterase D family.

The catalysed reaction is S-formylglutathione + H2O = formate + glutathione + H(+). Serine hydrolase involved in the detoxification of formaldehyde. Hydrolyzes S-formylglutathione to glutathione and formate. This chain is S-formylglutathione hydrolase FrmB (frmB), found in Escherichia coli O139:H28 (strain E24377A / ETEC).